Here is a 295-residue protein sequence, read N- to C-terminus: Small ribosomal subunit protein uS2 (295 aa).

Residue S2 is modified to N-acetylserine. S43 carries the post-translational modification Phosphoserine. Position 52 is an N6-acetyllysine (K52). The tract at residues 54–113 (TWEKLLLAARAIVAIENPADVSVISSRNTGQRAVLKFAAATGATPIAGRFTPGTFTNQIQ) is interaction with PPP1R16B. K89 carries the post-translational modification N6-acetyllysine; alternate. K89 participates in a covalent cross-link: Glycyl lysine isopeptide (Lys-Gly) (interchain with G-Cter in SUMO2); alternate. T97 carries the phosphothreonine modification. 2 laminin-binding regions span residues 161–180 (IPCNNKGAHSVGLMWWMLAR) and 205–229 (RDPEEIEKEEQAAAEKAVTKEEFQG). 5 [DE]-W-[ST] repeats span residues 230 to 232 (EWT), 247 to 249 (DWS), 266 to 268 (DWS), 275 to 277 (DWS), and 293 to 295 (EWS). The segment at 242–295 (QPEVADWSEGVQVPSVPIQQFPTEDWSAQPATEDWSAAPTAQATEWVGATTEWS) is laminin-binding. The interval 266–295 (DWSAQPATEDWSAAPTAQATEWVGATTEWS) is disordered.

The protein belongs to the universal ribosomal protein uS2 family. As to quaternary structure, monomer (37LRP) and homodimer (67LR). Component of the small ribosomal subunit. Mature ribosomes consist of a small (40S) and a large (60S) subunit. The 40S subunit contains about 33 different proteins and 1 molecule of RNA (18S). The 60S subunit contains about 49 different proteins and 3 molecules of RNA (28S, 5.8S and 5S). Interacts with RPS21. Interacts with several laminins including at least LAMB1. Interacts with MDK. The mature dimeric form interacts with PPP1R16B (via its fourth ankyrin repeat). Interacts with PPP1CA only in the presence of PPP1R16B. In terms of processing, acylated. Acylation may be a prerequisite for conversion of the monomeric 37 kDa laminin receptor precursor (37LRP) to the mature dimeric 67 kDa laminin receptor (67LR), and may provide a mechanism for membrane association. Cleaved by stromelysin-3 (ST3) at the cell surface. Cleavage by stromelysin-3 may be a mechanism to alter cell-extracellular matrix interactions.

Its subcellular location is the cell membrane. The protein localises to the cytoplasm. The protein resides in the nucleus. Its function is as follows. Required for the assembly and/or stability of the 40S ribosomal subunit. Required for the processing of the 20S rRNA-precursor to mature 18S rRNA in a late step of the maturation of 40S ribosomal subunits. Also functions as a cell surface receptor for laminin. Plays a role in cell adhesion to the basement membrane and in the consequent activation of signaling transduction pathways. May play a role in cell fate determination and tissue morphogenesis. Also acts as a receptor for several other ligands, including the pathogenic prion protein, viruses, and bacteria. Acts as a PPP1R16B-dependent substrate of PPP1CA. This Chlorocebus aethiops (Green monkey) protein is Small ribosomal subunit protein uS2.